The primary structure comprises 320 residues: Probable 5-dehydro-4-deoxyglucarate dehydratase (320 aa).

This sequence belongs to the DapA family.

The catalysed reaction is 5-dehydro-4-deoxy-D-glucarate + H(+) = 2,5-dioxopentanoate + CO2 + H2O. It participates in carbohydrate acid metabolism; D-glucarate degradation; 2,5-dioxopentanoate from D-glucarate: step 2/2. The protein is Probable 5-dehydro-4-deoxyglucarate dehydratase of Streptomyces griseus subsp. griseus (strain JCM 4626 / CBS 651.72 / NBRC 13350 / KCC S-0626 / ISP 5235).